Consider the following 369-residue polypeptide: Mycofactocin maturase MftC (369 aa).

Residues 16–232 (LDAPICLTWE…KGERVLTGDS (217 aa)) form the Radical SAM core domain. The [4Fe-4S] cluster site is built by Cys30, Cys34, Cys37, Cys251, Cys258, Cys269, Cys310, Cys313, Cys319, Cys323, and Cys341. Residues 347–369 (APALAQERHAPRPRVDHSRGSRE) form a disordered region. The segment covering 352 to 369 (QERHAPRPRVDHSRGSRE) has biased composition (basic and acidic residues).

It belongs to the radical SAM superfamily. MftC family. As to quaternary structure, interacts with MftB. [4Fe-4S] cluster is required as a cofactor.

The enzyme catalyses [mycofactocin precursor peptide]-C-terminal glycyl-L-valyl-L-tyrosine + S-adenosyl-L-methionine = [mycofactocin precursor peptide]-C-terminal glycyl-N-{[2-(4-hydroxyphenyl)ethenyl]-3-methylbutanamide} + 5'-deoxyadenosine + L-methionine + CO2. It catalyses the reaction [mycofactocin precursor peptide]-C-terminal glycyl-N-{[2-(4-hydroxyphenyl)ethenyl]-3-methylbutanamide} + AH2 + S-adenosyl-L-methionine = [mycofactocin precursor peptide]-C-terminal glycyl-N-{5-[(4-hydroxyphenyl)methyl]-4,4-dimethyl-2-oxopyrrolidin-3-yl}acetamide + 5'-deoxyadenosine + L-methionine + A + H(+). Radical S-adenosylmethionine (SAM) enzyme responsible for the first step of the biosynthesis of the enzyme cofactor mycofactocin (MFT). Catalyzes two reactions at the C-terminus of the mycofactocin precursor (the MftA peptide). The first one is the oxidative decarboxylation of the C-terminal L-tyrosine of MftA, forming an unsaturated tyramine moiety. The second reaction is the cross-linking of the tyramine with the penultimate L-valine residue, forming a five-membered lactam ring. Its activity requires the presence of the MftB chaperone. This Mycobacterium ulcerans (strain Agy99) protein is Mycofactocin maturase MftC.